The chain runs to 193 residues: DNA damage-inducible transcript 4-like protein (193 aa).

The protein belongs to the DDIT4 family.

It is found in the cytoplasm. Its function is as follows. Inhibits cell growth by regulating the TOR signaling pathway upstream of the TSC1-TSC2 complex and downstream of AKT1. The chain is DNA damage-inducible transcript 4-like protein (DDIT4L) from Bos taurus (Bovine).